The chain runs to 450 residues: Isoleucine 2-epimerase (450 aa).

Residues 115–116, Tyr-142, and 250–253 each bind pyridoxal 5'-phosphate; these read GS and DEVN. An N6-(pyridoxal phosphate)lysine modification is found at Lys-280. Thr-309 lines the pyridoxal 5'-phosphate pocket.

It belongs to the class-III pyridoxal-phosphate-dependent aminotransferase family. As to quaternary structure, homotetramer. Requires pyridoxal 5'-phosphate as cofactor.

It catalyses the reaction L-isoleucine = D-allo-isoleucine. Its function is as follows. Catalyzes the epimerization of L-isoleucine to D-allo-isoleucine and D-allo-isoleucine to L-isoleucine. Can also catalyze the racemization of many nonpolar amino acids, including leucine and valine. Does not have GABA aminotransferase activity. This chain is Isoleucine 2-epimerase, found in Lentilactobacillus buchneri (Lactobacillus buchneri).